Here is a 625-residue protein sequence, read N- to C-terminus: pH-response transcription factor pacC/RIM101 (625 aa).

Residues 1–34 (MSSQDQQQQQQPAQTQTSTSSSSNNENATTATSS) show a composition bias toward low complexity. The tract at residues 1–35 (MSSQDQQQQQQPAQTQTSTSSSSNNENATTATSSI) is disordered. 3 consecutive C2H2-type zinc fingers follow at residues 45–70 (LLCQWEKCSERCPTPEALFDHICEKH), 81–105 (LTCGWNSCRTTTVKRDHITSHIRVH), and 111–133 (HKCEFCGKAFKRPQDLKKHVKTH). Over residues 391–416 (APMTATHSSHSVSSGTPALTPPSSSV) the composition is skewed to polar residues. Residues 391–440 (APMTATHSSHSVSSGTPALTPPSSSVSYTSGNSPMSSSGMSPISRHSSTS) form a disordered region. A compositionally biased stretch (low complexity) spans 417 to 438 (SYTSGNSPMSSSGMSPISRHSS). The short motif at 444-447 (YPNL) is the YPX[LI] motif 1 element. Disordered regions lie at residues 455–543 (SPHH…SPSV) and 584–625 (VKDE…DDDE). Composition is skewed to polar residues over residues 461 to 472 (TAPTSTLGTNFD) and 490 to 514 (GLNSSQYRESMETSTVGSPTPSPKE). The YPX[LI] motif 2 motif lies at 615-618 (YPVL).

Belongs to the pacC/RIM101 family. Activated by C-terminal proteolytic cleavage by signaling protease (probably palB/RIM13) at neutral to alkaline ambient pH.

It localises to the cytoplasm. The protein localises to the nucleus. Transcription factor that mediates regulation of both acid- and alkaline-expressed genes in response to ambient pH. At alkaline ambient pH, activates transcription of alkaline-expressed genes (including pac1 itself) and represses transcription of acid-expressed genes. The sequence is that of pH-response transcription factor pacC/RIM101 (pac1) from Sclerotinia sclerotiorum (White mold).